Reading from the N-terminus, the 311-residue chain is Aspartate carbamoyltransferase catalytic subunit (311 aa).

Carbamoyl phosphate-binding residues include R52 and T53. K80 is a binding site for L-aspartate. Carbamoyl phosphate contacts are provided by R102, H131, and Q134. L-aspartate contacts are provided by R164 and R216. Carbamoyl phosphate contacts are provided by A259 and P260.

This sequence belongs to the aspartate/ornithine carbamoyltransferase superfamily. ATCase family. Heterododecamer (2C3:3R2) of six catalytic PyrB chains organized as two trimers (C3), and six regulatory PyrI chains organized as three dimers (R2).

It catalyses the reaction carbamoyl phosphate + L-aspartate = N-carbamoyl-L-aspartate + phosphate + H(+). Its pathway is pyrimidine metabolism; UMP biosynthesis via de novo pathway; (S)-dihydroorotate from bicarbonate: step 2/3. Its function is as follows. Catalyzes the condensation of carbamoyl phosphate and aspartate to form carbamoyl aspartate and inorganic phosphate, the committed step in the de novo pyrimidine nucleotide biosynthesis pathway. In Lactiplantibacillus plantarum (strain ATCC BAA-793 / NCIMB 8826 / WCFS1) (Lactobacillus plantarum), this protein is Aspartate carbamoyltransferase catalytic subunit.